The sequence spans 1210 residues: Epidermal growth factor receptor (1210 aa).

A signal peptide spans 1–24 (MRPSGTARTTLLVLLTALCAAGGA). The Extracellular portion of the chain corresponds to 25–647 (LEEKKVCQGT…VWPSGPKIPS (623 aa)). A disulfide bridge connects residues C31 and C58. The stretch at 75-300 (DLSFLKTIQE…CVKKCPRNYV (226 aa)) is one Approximate repeat. N-linked (GlcNAc...) asparagine glycosylation is found at N128, N175, and N196. Intrachain disulfides connect C157–C187, C190–C199, C194–C207, C215–C223, C219–C231, C232–C240, C236–C248, C251–C260, C264–C291, C295–C307, C311–C326, C329–C333, and C337–C362. Position 229 is a phosphoserine (S229). 3 N-linked (GlcNAc...) asparagine glycosylation sites follow: N352, N413, and N444. One copy of the Approximate repeat lies at 390 to 600 (RELEILKTVK…CVKTCPAGIM (211 aa)). 11 disulfides stabilise this stretch: C470/C499, C506/C515, C510/C523, C526/C535, C539/C555, C558/C571, C562/C579, C582/C591, C595/C617, C620/C628, and C624/C636. N528 carries an N-linked (GlcNAc...) asparagine glycan. N568 carries an N-linked (GlcNAc...) asparagine glycan. 2 N-linked (GlcNAc...) asparagine glycosylation sites follow: N603 and N623. A helical transmembrane segment spans residues 648–670 (IATGIVGGLLFIVVVALGIGLFM). At 671-1210 (RRRHIVRKRT…APPSSEFIGA (540 aa)) the chain is on the cytoplasmic side. Phosphothreonine; by PKC and PKD/PRKD1 is present on T680. An important for dimerization, phosphorylation and activation region spans residues 690–706 (LVEPLTPSGEAPNQAHL). Position 695 is a phosphothreonine; by PKD/PRKD1 (T695). S697 is subject to Phosphoserine. One can recognise a Protein kinase domain in the interval 714–981 (FKKIKVLGSG…KMARDPQRYL (268 aa)). A Glycyl lysine isopeptide (Lys-Gly) (interchain with G-Cter in ubiquitin) cross-link involves residue K718. 720–728 (LGSGAFGTV) lines the ATP pocket. A Glycyl lysine isopeptide (Lys-Gly) (interchain with G-Cter in ubiquitin) cross-link involves residue K739. K747 serves as a coordination point for ATP. At K747 the chain carries N6-(2-hydroxyisobutyryl)lysine. Residues K756 and K759 each participate in a glycyl lysine isopeptide (Lys-Gly) (interchain with G-Cter in ubiquitin) cross-link. An ATP-binding site is contributed by 792-793 (TQ). The active-site Proton acceptor is the D839. D857 contributes to the ATP binding site. Residue K869 forms a Glycyl lysine isopeptide (Lys-Gly) (interchain with G-Cter in ubiquitin) linkage. Y871 bears the Phosphotyrosine mark. Residues K931, K962, and K972 each participate in a glycyl lysine isopeptide (Lys-Gly) (interchain with G-Cter in ubiquitin) cross-link. Residues S993 and S997 each carry the phosphoserine modification. Residues Y1000 and Y1018 each carry the phosphotyrosine; by autocatalysis modification. S1028 and S1041 each carry phosphoserine. Position 1043 is a phosphothreonine (T1043). A Phosphoserine modification is found at S1044. A lipid anchor (S-palmitoyl cysteine) is attached at C1051. Y1069 carries the post-translational modification Phosphotyrosine. Phosphoserine is present on residues S1070 and S1071. Residues Y1092 and Y1110 each carry the phosphotyrosine; by autocatalysis modification. Positions 1113–1137 (QPLHPAPGRDLHYQNPHSNAVGNPE) are disordered. Residues 1127–1137 (NPHSNAVGNPE) show a composition bias toward polar residues. Residue C1146 is the site of S-palmitoyl cysteine attachment. At S1166 the chain carries Phosphoserine. The residue at position 1172 (Y1172) is a Phosphotyrosine; by autocatalysis. Y1197 bears the Phosphotyrosine mark. R1199 bears the Omega-N-methylarginine mark.

This sequence belongs to the protein kinase superfamily. Tyr protein kinase family. EGF receptor subfamily. In terms of assembly, binding of the ligand triggers homo- and/or heterodimerization of the receptor triggering its autophosphorylation. Heterodimer with ERBB2. Forms a complex with CCDC88A/GIV (via SH2-like region) and GNAI3 which leads to enhanced EGFR signaling and triggering of cell migration; binding of CCDC88A requires autophosphorylation of the EGFR C-terminal region, and ligand stimulation is required for recruitment of GNAI3 to the complex. Interacts with ERRFI1; inhibits dimerization of the kinase domain and autophosphorylation. Part of a complex with ERBB2 and either PIK3C2A or PIK3C2B. Interacts with GRB2; an adapter protein coupling the receptor to downstream signaling pathways. Interacts with GAB2; involved in signaling downstream of EGFR. Interacts with STAT3; mediates EGFR downstream signaling in cell proliferation. Interacts with RIPK1; involved in NF-kappa-B activation. Interacts (autophosphorylated) with CBL, CBLB and CBLC; involved in EGFR ubiquitination and regulation; interaction with CBL is reduced in the presence of tensin TNS4. Interacts with SOCS5; regulates EGFR degradation through ELOC- and ELOB-mediated ubiquitination and proteasomal degradation. Interacts with PRMT5; methylates EGFR and enhances interaction with PTPN6. Interacts (phosphorylated) with PTPN6; inhibits EGFR-dependent activation of MAPK/ERK. Interacts with COPG1; essential for regulation of EGF-dependent nuclear transport of EGFR by retrograde trafficking from the Golgi to the ER. Interacts with TNK2; this interaction is dependent on EGF stimulation and kinase activity of EGFR. Interacts with PCNA; positively regulates PCNA. Interacts with PELP1. Interacts with MUC1. Interacts with AP2M1. Interacts with FER. Interacts (via SH2 domains) with GRB2, NCK1 and NCK2. Interacts with EPS8; mediates EPS8 phosphorylation. Interacts with ATXN2. Interacts with GAREM1. Interacts (ubiquitinated) with ANKRD13A/B/D; the interaction is direct and may regulate EGFR internalization after EGF stimulation. Interacts with GPER1; the interaction occurs in an estrogen-dependent manner. Interacts (via C-terminal cytoplasmic kinase domain) with ZPR1 (via zinc fingers). Interacts with RNF115 and RNF126. Interacts with GPRC5A (via its transmembrane domain). Interacts with FAM83B; positively regulates EGFR inducing its autophosphorylation in absence of stimulation by EGF. Interacts with LAPTM4B; positively correlates with EGFR activation. Interacts with STX19. Interacts with CD44. Interacts with PGRMC1; the interaction requires PGRMC1 homodimerization. Interacts with PIKFYVE. Interacts with NEU3. Interacts with TRAF4. Interacts with the ant venom OMEGA-myrmeciitoxin(02)-Mg1a. Interacts with CD82; this interaction facilitates ligand-induced endocytosis of the receptor and its subsequent desensitization. Monoubiquitinated and polyubiquitinated upon EGF stimulation; which does not affect tyrosine kinase activity or signaling capacity but may play a role in lysosomal targeting. Polyubiquitin linkage is mainly through 'Lys-63', but linkage through 'Lys-48', 'Lys-11' and 'Lys-29' also occurs. Deubiquitinated by OTUD7B, preventing degradation. Ubiquitinated by RNF115 and RNF126. Ubiquitinated by ZNRF1 or CBL at different lysines in response to EGF stimulation; leading to recruitment of the ESCRT machinery and subsequent degradation in the lysosomes. Deubiquitinated by UCHL1 leading to the inhibition of its degradation. Post-translationally, phosphorylated on Tyr residues in response to EGF. Phosphorylation at Ser-697 is partial and occurs only if Thr-695 is phosphorylated. Phosphorylation at Thr-680 and Thr-695 by PRKD1 inhibits EGF-induced MAPK8/JNK1 activation. Dephosphorylation by PTPRJ prevents endocytosis and stabilizes the receptor at the plasma membrane. Autophosphorylation at Tyr-1199 is stimulated by methylation at Arg-1199 and enhances interaction with PTPN6. Autophosphorylation at Tyr-1092 and/or Tyr-1110 recruits STAT3. Dephosphorylated by PTPN1 and PTPN2. In terms of processing, palmitoylated on Cys residues by ZDHHC20. Palmitoylation inhibits internalization after ligand binding, and increases the persistence of tyrosine-phosphorylated EGFR at the cell membrane. Palmitoylation increases the amplitude and duration of EGFR signaling. Methylated. Methylation at Arg-1199 by PRMT5 stimulates phosphorylation at Tyr-1197.

The protein resides in the cell membrane. The protein localises to the endoplasmic reticulum membrane. It localises to the golgi apparatus membrane. Its subcellular location is the nucleus membrane. It is found in the endosome. The protein resides in the endosome membrane. The protein localises to the nucleus. It carries out the reaction L-tyrosyl-[protein] + ATP = O-phospho-L-tyrosyl-[protein] + ADP + H(+). Its activity is regulated as follows. Endocytosis and inhibition of the activated EGFR by phosphatases like PTPRJ and PTPRK constitute immediate regulatory mechanisms. Upon EGF-binding phosphorylates EPS15 that regulates EGFR endocytosis and activity. Moreover, inducible feedback inhibitors including LRIG1, SOCS4, SOCS5 and ERRFI1 constitute alternative regulatory mechanisms for the EGFR signaling. Its function is as follows. Receptor tyrosine kinase binding ligands of the EGF family and activating several signaling cascades to convert extracellular cues into appropriate cellular responses. Known ligands include EGF, TGFA/TGF-alpha, AREG, epigen/EPGN, BTC/betacellulin, epiregulin/EREG and HBEGF/heparin-binding EGF. Ligand binding triggers receptor homo- and/or heterodimerization and autophosphorylation on key cytoplasmic residues. The phosphorylated receptor recruits adapter proteins like GRB2 which in turn activates complex downstream signaling cascades. Activates at least 4 major downstream signaling cascades including the RAS-RAF-MEK-ERK, PI3 kinase-AKT, PLCgamma-PKC and STATs modules. May also activate the NF-kappa-B signaling cascade. Also directly phosphorylates other proteins like RGS16, activating its GTPase activity and probably coupling the EGF receptor signaling to the G protein-coupled receptor signaling. Also phosphorylates MUC1 and increases its interaction with SRC and CTNNB1/beta-catenin. Positively regulates cell migration via interaction with CCDC88A/GIV which retains EGFR at the cell membrane following ligand stimulation, promoting EGFR signaling which triggers cell migration. Plays a role in enhancing learning and memory performance. Plays a role in mammalian pain signaling (long-lasting hypersensitivity). This is Epidermal growth factor receptor from Mus musculus (Mouse).